The primary structure comprises 523 residues: UvrABC system protein C (523 aa).

Positions 15–93 constitute a GIY-YIG domain; that stretch reads HLPGCYLFKD…IKKHWPRYNI (79 aa). One can recognise a UVR domain in the interval 197–232; it reads RELIESMETEMKEMAAKQMFEQAMELRDEIAALEYL.

Belongs to the UvrC family. As to quaternary structure, interacts with UvrB in an incision complex.

The protein resides in the cytoplasm. Functionally, the UvrABC repair system catalyzes the recognition and processing of DNA lesions. UvrC both incises the 5' and 3' sides of the lesion. The N-terminal half is responsible for the 3' incision and the C-terminal half is responsible for the 5' incision. The sequence is that of UvrABC system protein C from Methanosarcina mazei (strain ATCC BAA-159 / DSM 3647 / Goe1 / Go1 / JCM 11833 / OCM 88) (Methanosarcina frisia).